We begin with the raw amino-acid sequence, 473 residues long: PEP-dependent dihydroxyacetone kinase, phosphoryl donor subunit DhaM (473 aa).

Positions 1-137 (MVNLVIVSHS…LAAKQAQLGI (137 aa)) constitute a PTS EIIA type-4 domain. H9 functions as the Tele-phosphohistidine intermediate in the catalytic mechanism. Residues 155–242 (ARSVTVTIRN…SLAAEDFGEH (88 aa)) enclose the HPr domain. H169 serves as the catalytic Pros-phosphohistidine intermediate. Residues 266–472 (PLPLAQPARH…IDPAAQRVSC (207 aa)) are PTS EI-like, N-terminal part. H432 serves as the catalytic Tele-phosphohistidine intermediate.

This sequence belongs to the PEP-utilizing enzyme family. In terms of assembly, homodimer. The dihydroxyacetone kinase complex is composed of a homodimer of DhaM, a homodimer of DhaK and the subunit DhaL.

The enzyme catalyses dihydroxyacetone + phosphoenolpyruvate = dihydroxyacetone phosphate + pyruvate. Functionally, component of the dihydroxyacetone kinase complex, which is responsible for the phosphoenolpyruvate (PEP)-dependent phosphorylation of dihydroxyacetone. DhaM serves as the phosphoryl donor. Is phosphorylated by phosphoenolpyruvate in an EI- and HPr-dependent reaction, and a phosphorelay system on histidine residues finally leads to phosphoryl transfer to DhaL and dihydroxyacetone. In Pantoea ananatis (strain LMG 20103), this protein is PEP-dependent dihydroxyacetone kinase, phosphoryl donor subunit DhaM.